The sequence spans 339 residues: 4-hydroxy-2-oxovalerate aldolase 3 (339 aa).

One can recognise a Pyruvate carboxyltransferase domain in the interval 7-259 (IRVTDTSLRD…KTGIDFFAIA (253 aa)). 15-16 (RD) contributes to the substrate binding site. Aspartate 16 contacts Mn(2+). Histidine 19 acts as the Proton acceptor in catalysis. Serine 169 and histidine 198 together coordinate substrate. Histidine 198 and histidine 200 together coordinate Mn(2+). Tyrosine 289 lines the substrate pocket.

This sequence belongs to the 4-hydroxy-2-oxovalerate aldolase family.

The enzyme catalyses (S)-4-hydroxy-2-oxopentanoate = acetaldehyde + pyruvate. In Rhodococcus jostii (strain RHA1), this protein is 4-hydroxy-2-oxovalerate aldolase 3 (hsaF).